Reading from the N-terminus, the 316-residue chain is MFKFDKKQEVFELGGVKFGGQPGENPTVLVSTMFYARHKIVTDEDKGIFDRAAAETLWNTQVSLSDATGLPYVNQIVGETPESIKRYIEWFVGIDDRTPFLIDSSAGNVRAAAAQYCTEIGVADRAIHNSINASIEQSEIDVLTESDVSAAIVLAFNATDPTVKGKIDILEVGGSGQTKGMLQVAKECGIKYPIIDVAAMPLGAGSGATIRSVPTLKGKFGLPIGGGYHNMASAWDWLRKFKKTQPDPKAIYMPTDIGTNLVAQIAGSDYLLYGPIENVNQIFPAVAMVDIMLGETAKELGVEIADLENHPVTKLT.

Belongs to the MtrH family. As to quaternary structure, the complex is composed of 8 subunits; MtrA, MtrB, MtrC, MtrD, MtrE, MtrF, MtrG and MtrH.

It carries out the reaction 5-methyl-5,6,7,8-tetrahydromethanopterin + coenzyme M + 2 Na(+)(in) = 5,6,7,8-tetrahydromethanopterin + methyl-coenzyme M + 2 Na(+)(out). It functions in the pathway one-carbon metabolism; methanogenesis from CO(2); methyl-coenzyme M from 5,10-methylene-5,6,7,8-tetrahydromethanopterin: step 2/2. Functionally, part of a complex that catalyzes the formation of methyl-coenzyme M and tetrahydromethanopterin from coenzyme M and methyl-tetrahydromethanopterin. This is an energy-conserving, sodium-ion translocating step. MtrH catalyzes the transfer of the methyl group from methyl-tetrahydromethanopterin to the corrinoid prosthetic group of MtrA. The sequence is that of Tetrahydromethanopterin S-methyltransferase subunit H (mtrH) from Methanosarcina mazei (strain ATCC BAA-159 / DSM 3647 / Goe1 / Go1 / JCM 11833 / OCM 88) (Methanosarcina frisia).